Consider the following 255-residue polypeptide: Sugar fermentation stimulation protein homolog (255 aa).

Belongs to the SfsA family.

The chain is Sugar fermentation stimulation protein homolog from Synechococcus sp. (strain WH7803).